The following is a 353-amino-acid chain: sn-glycerol-3-phosphate import ATP-binding protein UgpC (353 aa).

The ABC transporter domain maps to 4–234; the sequence is ILLNDVRKSY…PASEFVAGFI (231 aa). 36 to 43 contributes to the ATP binding site; the sequence is GPSGCGKS.

This sequence belongs to the ABC transporter superfamily. sn-glycerol-3-phosphate importer (TC 3.A.1.1.3) family. The complex is composed of two ATP-binding proteins (UgpC), two transmembrane proteins (UgpA and UgpE) and a solute-binding protein (UgpB).

The protein resides in the cell inner membrane. It catalyses the reaction sn-glycerol 3-phosphate(out) + ATP + H2O = sn-glycerol 3-phosphate(in) + ADP + phosphate + H(+). Part of the ABC transporter complex UgpBAEC involved in sn-glycerol-3-phosphate (G3P) import. Responsible for energy coupling to the transport system. In Paracoccus denitrificans (strain Pd 1222), this protein is sn-glycerol-3-phosphate import ATP-binding protein UgpC.